Reading from the N-terminus, the 345-residue chain is Dense granule protein 4 (345 aa).

The N-terminal stretch at methionine 1–glycine 20 is a signal peptide. The span at serine 227–threonine 251 shows a compositional bias: polar residues. Residues serine 227 to lysine 271 form a disordered region. The helical transmembrane segment at isoleucine 276–valine 296 threads the bilayer. Positions glycine 298–glutamate 345 are disordered. Residues arginine 321 to serine 330 are compositionally biased toward pro residues. Basic and acidic residues predominate over residues leucine 335–glutamate 345.

Post-translationally, O-glycosylated.

Its subcellular location is the secreted. The protein localises to the parasitophorous vacuole lumen. It is found in the parasitophorous vacuole membrane. The protein resides in the cytoplasmic vesicle. It localises to the secretory vesicle. Functionally, major granular component involved in excreted-secreted antigen (ESA) immunity. The sequence is that of Dense granule protein 4 (GRA4) from Toxoplasma gondii.